The chain runs to 590 residues: Aspartate--tRNA(Asp/Asn) ligase (590 aa).

Glu-170 serves as a coordination point for L-aspartate. The segment at 194–197 is aspartate; sequence QLFK. Residue Arg-216 participates in L-aspartate binding. Residues 216-218 and Gln-225 contribute to the ATP site; that span reads RDE. His-448 is a binding site for L-aspartate. Residue Glu-482 coordinates ATP. Arg-489 lines the L-aspartate pocket. ATP is bound at residue 534-537; the sequence is GWDR. Residues 557-590 form a disordered region; that stretch reads SGGGADPLTGAPAPITPQQRRESGIDAKPKKDGE. Residues 575 to 590 show a composition bias toward basic and acidic residues; it reads QRRESGIDAKPKKDGE.

Belongs to the class-II aminoacyl-tRNA synthetase family. Type 1 subfamily. In terms of assembly, homodimer.

The protein localises to the cytoplasm. The enzyme catalyses tRNA(Asx) + L-aspartate + ATP = L-aspartyl-tRNA(Asx) + AMP + diphosphate. Aspartyl-tRNA synthetase with relaxed tRNA specificity since it is able to aspartylate not only its cognate tRNA(Asp) but also tRNA(Asn). Reaction proceeds in two steps: L-aspartate is first activated by ATP to form Asp-AMP and then transferred to the acceptor end of tRNA(Asp/Asn). The chain is Aspartate--tRNA(Asp/Asn) ligase from Mycobacterium sp. (strain KMS).